The primary structure comprises 243 residues: MSETHFGFEKVDETEKAGKVAGVFHSVASKYDVMNDLMSGGMHRLWKMFTIAQAGVRPGHKVLDIAGGTGDLAKAFAKQAGPTGQVWLTDINESMLRVGRDRLLNKGIVTPVALCDAEKIPFPDNYFDLVTVAFGLRNMTHKEAALAEMRRVVKPGGKVMVLEFSKVWKPLEKAYDVYSFKVLPWLGQRVAGDAPSYRYLAESIRMHPDQVSLVRLMEHAGLENVEYFNLTAGVVALHVGRKY.

S-adenosyl-L-methionine contacts are provided by residues threonine 69, aspartate 90, and 116 to 117; that span reads DA.

The protein belongs to the class I-like SAM-binding methyltransferase superfamily. MenG/UbiE family.

It carries out the reaction a 2-demethylmenaquinol + S-adenosyl-L-methionine = a menaquinol + S-adenosyl-L-homocysteine + H(+). The catalysed reaction is a 2-methoxy-6-(all-trans-polyprenyl)benzene-1,4-diol + S-adenosyl-L-methionine = a 5-methoxy-2-methyl-3-(all-trans-polyprenyl)benzene-1,4-diol + S-adenosyl-L-homocysteine + H(+). It participates in quinol/quinone metabolism; menaquinone biosynthesis; menaquinol from 1,4-dihydroxy-2-naphthoate: step 2/2. Its pathway is cofactor biosynthesis; ubiquinone biosynthesis. In terms of biological role, methyltransferase required for the conversion of demethylmenaquinol (DMKH2) to menaquinol (MKH2) and the conversion of 2-polyprenyl-6-methoxy-1,4-benzoquinol (DDMQH2) to 2-polyprenyl-3-methyl-6-methoxy-1,4-benzoquinol (DMQH2). The polypeptide is Ubiquinone/menaquinone biosynthesis C-methyltransferase UbiE (Cupriavidus taiwanensis (strain DSM 17343 / BCRC 17206 / CCUG 44338 / CIP 107171 / LMG 19424 / R1) (Ralstonia taiwanensis (strain LMG 19424))).